We begin with the raw amino-acid sequence, 459 residues long: Putrescine aminotransferase (459 aa).

Pyridoxal 5'-phosphate-binding positions include 150–151 and glutamine 274; that span reads GT. At lysine 300 the chain carries N6-(pyridoxal phosphate)lysine. Threonine 332 lines the pyridoxal 5'-phosphate pocket.

Belongs to the class-III pyridoxal-phosphate-dependent aminotransferase family. Putrescine aminotransferase subfamily. Pyridoxal 5'-phosphate serves as cofactor.

The catalysed reaction is an alkane-alpha,omega-diamine + 2-oxoglutarate = an omega-aminoaldehyde + L-glutamate. It carries out the reaction putrescine + 2-oxoglutarate = 1-pyrroline + L-glutamate + H2O. The enzyme catalyses cadaverine + 2-oxoglutarate = 5-aminopentanal + L-glutamate. It participates in amine and polyamine degradation; putrescine degradation; 4-aminobutanal from putrescine (transaminase route): step 1/1. Catalyzes the aminotransferase reaction from putrescine to 2-oxoglutarate, leading to glutamate and 4-aminobutanal, which spontaneously cyclizes to form 1-pyrroline. This is the first step in one of two pathways for putrescine degradation, where putrescine is converted into 4-aminobutanoate (gamma-aminobutyrate or GABA) via 4-aminobutanal. Also functions as a cadaverine transaminase in a a L-lysine degradation pathway to succinate that proceeds via cadaverine, glutarate and L-2-hydroxyglutarate. The chain is Putrescine aminotransferase from Klebsiella pneumoniae (strain 342).